We begin with the raw amino-acid sequence, 503 residues long: Probable cytochrome P450 6a19 (503 aa).

Cys-445 lines the heme pocket.

The protein belongs to the cytochrome P450 family. Requires heme as cofactor.

The protein resides in the endoplasmic reticulum membrane. The protein localises to the microsome membrane. Its function is as follows. May be involved in the metabolism of insect hormones and in the breakdown of synthetic insecticides. This Drosophila melanogaster (Fruit fly) protein is Probable cytochrome P450 6a19 (Cyp6a19).